The primary structure comprises 1147 residues: GPI inositol-deacylase (1147 aa).

Residues 1 to 94 are disordered; that stretch reads MRRHSSGSSE…RTSPSSPLGL (94 aa). The N-linked (GlcNAc...) asparagine glycan is linked to Asn23. Residues 28–49 show a composition bias toward basic and acidic residues; it reads SAKDSRSSAHPTTKLDHNRNAD. Low complexity predominate over residues 50-63; it reads RPPSFSISRRSSSI. Asn74 carries N-linked (GlcNAc...) asparagine glycosylation. Residues 127–147 traverse the membrane as a helical segment; that stretch reads AITFSALVAAIVGIGFLVAVL. The active site involves Ser310. Transmembrane regions (helical) follow at residues 795-815 and 843-863; these read LYMRYRTVFAAFPLFIVALVL and IPLMLASLTLLTLSTGIMAPA. N-linked (GlcNAc...) asparagine glycans are attached at residues Asn865 and Asn873. The next 3 membrane-spanning stretches (helical) occupy residues 893–913, 918–938, and 965–985; these read PLFLFLIPLIAIVCVGVCTVF, LTLTHLLGVLASLVTFHPGWI, and VLLLLVTTMVPYQFAYLVACL. An N-linked (GlcNAc...) asparagine glycan is attached at Asn1011. 3 helical membrane-spanning segments follow: residues 1015–1035, 1052–1072, and 1084–1104; these read SIFILMLWILPINLPTFVVWV, VLSVMPFIVLVETLTTGKMIP, and LLLFGMAVYAAVYGVTYAYTL.

The protein belongs to the GPI inositol-deacylase family.

The protein resides in the endoplasmic reticulum membrane. In terms of biological role, involved in inositol deacylation of GPI-anchored proteins which plays important roles in the quality control and ER-associated degradation of GPI-anchored proteins. The protein is GPI inositol-deacylase (BST1) of Chaetomium globosum (strain ATCC 6205 / CBS 148.51 / DSM 1962 / NBRC 6347 / NRRL 1970) (Soil fungus).